Here is a 1404-residue protein sequence, read N- to C-terminus: DNA-directed RNA polymerase subunit beta' (1404 aa).

Zn(2+) is bound by residues Cys-70, Cys-72, Cys-85, and Cys-88. Mg(2+) contacts are provided by Asp-460, Asp-462, and Asp-464. Positions 814, 888, 895, and 898 each coordinate Zn(2+).

The protein belongs to the RNA polymerase beta' chain family. As to quaternary structure, the RNAP catalytic core consists of 2 alpha, 1 beta, 1 beta' and 1 omega subunit. When a sigma factor is associated with the core the holoenzyme is formed, which can initiate transcription. Requires Mg(2+) as cofactor. Zn(2+) is required as a cofactor.

The catalysed reaction is RNA(n) + a ribonucleoside 5'-triphosphate = RNA(n+1) + diphosphate. Its function is as follows. DNA-dependent RNA polymerase catalyzes the transcription of DNA into RNA using the four ribonucleoside triphosphates as substrates. This chain is DNA-directed RNA polymerase subunit beta', found in Buchnera aphidicola subsp. Baizongia pistaciae (strain Bp).